We begin with the raw amino-acid sequence, 146 residues long: Bacterial hemoglobin (146 aa).

The 138-residue stretch at 1 to 138 folds into the Globin domain; that stretch reads MLDQQTINII…IADVFIQVEA (138 aa). Residues Gln53 and His85 each contribute to the heme b site.

This sequence belongs to the globin family. Homodimer.

This protein functions as a terminal oxidase. This Vitreoscilla stercoraria protein is Bacterial hemoglobin (vhb).